The chain runs to 43 residues: SPbeta prophage-derived uncharacterized protein YotD (43 aa).

The polypeptide is SPbeta prophage-derived uncharacterized protein YotD (yotD) (Bacillus subtilis (strain 168)).